The following is a 463-amino-acid chain: MVSHTHKRRKRASATQLYQTCKAAGTCPSDVINKVEHTTIADQILKWASMGVYFGGLGIGTGSGTGGRTGYVPLTTGRTGIVPKVTAEPGVVSRPPIVVESVAPTDPSIVSLIEESSIIQSGAPITNIPSHGGFEVTSSGSEVPAILDVSPSTSVHITTSTHLNPAFTDPTIVQPTPPVEAGGRIIISHSTVTADSAEQIPMDTFVIHSDPTTSTPIPGTAPRPRLGLYSKALQQVEIVDPTFLSSPQRLITYDNPVFEDPNATLTFEQPTVHEAPDSRFMDIVTLHRPALTSRRGIVRFSRVGARGTMYTRSGIRIGGRVHFFTDISSIPTEESIELQPLGRSQSFPTVSDTSDLYDIYADENLLNNDISFTDTHVSLQNSTKVVNTAVPLATVPDIYAQTGPDISFPTIPIHIPYIPVSPSISPQSVSIHGTDFYLHPSLWHLGKRRKRFSYFFTDNYVAA.

Residues 1–12 carry the Nuclear localization signal motif; the sequence is MVSHTHKRRKRA. Residues Cys21 and Cys27 are joined by a disulfide bond. The Nuclear localization signal motif lies at 444-452; the sequence is HLGKRRKRF.

It belongs to the papillomaviridae L2 protein family. As to quaternary structure, interacts with major capsid protein L1. Interacts with E2; this interaction inhibits E2 transcriptional activity but not the DNA replication function E2. Interacts with host GADD45GIP1. Interacts with host HSPA8; this interaction is required for L2 nuclear translocation. Interacts with host importins KPNB2 and KPNB3. Forms a complex with importin alpha2-beta1 heterodimers via interaction with the importin alpha2 adapter. Interacts with host DYNLT1; this interaction is essential for virus intracellular transport during entry. Interacts (via C-terminus) with host retromer subunits VPS35 and VPS29. Post-translationally, highly phosphorylated.

It localises to the virion. The protein localises to the host nucleus. The protein resides in the host early endosome. Its subcellular location is the host Golgi apparatus. In terms of biological role, minor protein of the capsid that localizes along the inner surface of the virion, within the central cavities beneath the L1 pentamers. Plays a role in capsid stabilization through interaction with the major capsid protein L1. Once the virion enters the host cell, L2 escorts the genomic DNA into the nucleus by promoting escape from the endosomal compartments and traffic through the host Golgi network. Mechanistically, the C-terminus of L2 possesses a cell-penetrating peptide that protudes from the host endosome, interacts with host cytoplasmic retromer cargo and thereby mediates the capsid delivery to the host trans-Golgi network. Plays a role through its interaction with host dynein in the intracellular microtubule-dependent transport of viral capsid toward the nucleus. Mediates the viral genome import into the nucleus through binding to host importins. Once within the nucleus, L2 localizes viral genomes to host PML bodies in order to activate early gene expression for establishment of infection. Later on, promotes late gene expression by interacting with the viral E2 protein and by inhibiting its transcriptional activation functions. During virion assembly, encapsidates the genome by direct interaction with the viral DNA. This Homo sapiens (Human) protein is Minor capsid protein L2.